Reading from the N-terminus, the 578-residue chain is Zinc finger protein with KRAB and SCAN domains 8 (578 aa).

Residues 1-20 (MAEESRKPSAPSPPDQTPEE) form a disordered region. The residue at position 12 (Ser12) is a Phosphoserine. A Glycyl lysine isopeptide (Lys-Gly) (interchain with G-Cter in SUMO2) cross-link involves residue Lys26. In terms of domain architecture, SCAN box spans 51 to 133 (RLRFRQLCYQ…TLLEDLERQI (83 aa)). Residues 158 to 205 (ASAPEPPNTQLQSEATQHKSPVPQESQERAMSTSQSPTRSQKGSSGDQ) form a disordered region. A compositionally biased stretch (polar residues) spans 165 to 205 (NTQLQSEATQHKSPVPQESQERAMSTSQSPTRSQKGSSGDQ). Glycyl lysine isopeptide (Lys-Gly) (interchain with G-Cter in SUMO2) cross-links involve residues Lys176 and Lys199. Ser201 bears the Phosphoserine mark. A KRAB domain is found at 220-316 (EKIEDMAVSL…GRLERQRGNP (97 aa)). Residues Lys221, Lys272, and Lys288 each participate in a glycyl lysine isopeptide (Lys-Gly) (interchain with G-Cter in SUMO2) cross-link. C2H2-type zinc fingers lie at residues 322 to 344 (HKCDECGKSFAQSSGLVRHWRIH) and 350 to 372 (YQCNVCGKAFSYRSALLSHQDIH). Residues Lys374 and Lys376 each participate in a glycyl lysine isopeptide (Lys-Gly) (interchain with G-Cter in SUMO2) cross-link. C2H2-type zinc fingers lie at residues 378–400 (YHCKECGKAFSQNTGLILHQRIH), 406–428 (YQCNQCGKAFSQSAGLILHQRIH), 434–456 (YECNECGKAFSHSSHLIGHQRIH), 462–484 (YECDECGKTFRRSSHLIGHQRSH), 490–512 (YKCNECGRAFSQKSGLIEHQRIH), 518–540 (YKCKECGKAFNGNTGLIQHLRIH), and 546–568 (YQCNECGKAFIQRSSLIRHQRIH). Glycyl lysine isopeptide (Lys-Gly) (interchain with G-Cter in SUMO2) cross-links involve residues Lys413 and Lys441. Lys502 participates in a covalent cross-link: Glycyl lysine isopeptide (Lys-Gly) (interchain with G-Cter in SUMO2). Residue Lys572 forms a Glycyl lysine isopeptide (Lys-Gly) (interchain with G-Cter in SUMO2) linkage.

Belongs to the krueppel C2H2-type zinc-finger protein family.

Its subcellular location is the nucleus. Functionally, may be involved in transcriptional regulation. The polypeptide is Zinc finger protein with KRAB and SCAN domains 8 (ZKSCAN8) (Pan troglodytes (Chimpanzee)).